Consider the following 121-residue polypeptide: MSLTNEQIIEAIGQKTVLEVVELIKAMEETFGVTAAVAAAGPAAAAAVVEEQTEFNVMLTEAGEKKVNVIKAVRELTGLGLKEAKAVVDGAPAMVLEAVAKEAADKAKAALEEAGAKVELK.

It belongs to the bacterial ribosomal protein bL12 family. As to quaternary structure, homodimer. Part of the ribosomal stalk of the 50S ribosomal subunit. Forms a multimeric L10(L12)X complex, where L10 forms an elongated spine to which 2 to 4 L12 dimers bind in a sequential fashion. Binds GTP-bound translation factors.

Forms part of the ribosomal stalk which helps the ribosome interact with GTP-bound translation factors. Is thus essential for accurate translation. The protein is Large ribosomal subunit protein bL12 of Pseudomonas fluorescens (strain ATCC BAA-477 / NRRL B-23932 / Pf-5).